The sequence spans 177 residues: Protein C2-DOMAIN ABA-RELATED 4 (177 aa).

In terms of domain architecture, C2 spans 4–118 (ACPARTSSLM…LRMQLDGLPS (115 aa)). The Ca(2+) site is built by Arg33, Asp34, Asp39, Asp85, His86, Asp87, and Asp93.

This sequence belongs to the plant CAR protein family. Dimers and oligomers. Binds to PYR/PYL/RCAR abscisic acid intracellular receptors in an ABA-independent manner, both at the plasma membrane and in the nucleus. Interacts directly with PYR1, PYL1, PYL4, PYL6 and PYL8. Binds phospholipids in a Ca(2+)-dependent manner. Interacts with YchF1. The cofactor is Ca(2+).

It is found in the cell membrane. Its subcellular location is the nucleus. The protein localises to the cytoplasm. The protein resides in the cytosol. Functionally, mediates the transient calcium-dependent interaction of PYR/PYL/RCAR abscisic acid (ABA) receptors with the plasma membrane and thus regulates ABA sensitivity. Stimulates the GTPase/ATPase activities of YchF1, and regulates its subcellular localization. Promotes tolerance towards salinity stress by limiting the accumulation of reactive oxygen species (ROS). Promotes resistance to bacterial pathogens (e.g. Xanthomonas oryzae pv. oryzae and P.syringae pv. tomato DC3000). Binds liposomes in the absence of exogenous Ca(2+), but this activity is enhanced in the presence of Ca(2+) and generates membrane curvature. The sequence is that of Protein C2-DOMAIN ABA-RELATED 4 from Arabidopsis thaliana (Mouse-ear cress).